A 457-amino-acid chain; its full sequence is Argininosuccinate lyase (457 aa).

This sequence belongs to the lyase 1 family. Argininosuccinate lyase subfamily.

Its subcellular location is the cytoplasm. It catalyses the reaction 2-(N(omega)-L-arginino)succinate = fumarate + L-arginine. The protein operates within amino-acid biosynthesis; L-arginine biosynthesis; L-arginine from L-ornithine and carbamoyl phosphate: step 3/3. The chain is Argininosuccinate lyase from Haemophilus influenzae (strain PittGG).